The primary structure comprises 2603 residues: Ankyrin repeat domain-containing protein 17 (2603 aa).

N-acetylmethionine is present on M1. Positions 1-32 (MEKATVPAAAEGEGSPPAAAAVAAPPAAAAAE) are enriched in low complexity. The disordered stretch occupies residues 1 to 127 (MEKATVPAAA…DDDEEEEVSE (127 aa)). 2 positions are modified to phosphoserine: S15 and S42. Positions 68-77 (PHHKAKRNRT) are enriched in basic residues. The segment covering 82 to 92 (SSSESSSDSDN) has biased composition (low complexity). Residues 93–107 (SGGGGGGGGGGGGGT) show a composition bias toward gly residues. Over residues 112 to 127 (SEEEEDDDDEEEEVSE) the composition is skewed to acidic residues. Residue S152 is modified to Phosphoserine. 15 ANK repeats span residues 229–258 (SDNRSLAEACSEGDVNAVRKLLIEGRSVNE), 262–291 (EGESLLCLACSAGYYELAQVLLAMHANVED), 296–325 (GDITPLMAAANGGHVKIVKLLLAHKADVNA), 329–358 (TGNTALTYACAGGYVDVVKVLLESGASIED), 362–391 (NGHTPLMEAGSAGHVEVARLLLENGAGINT), 396–425 (FKESALTLACYKGHLEMVRFLLEAGADQEH), 429–458 (EMHTALMEACMDGHVEVARLLLDSGAQVNM), 462–491 (SFESPLTLAACGGHVELAALLIERGASLEE), 495–524 (EGYTPLMEAAREGHEEMVALLLGQGANINA), 529–558 (TQETALTLACCGGFLEVADFLIKAGADIEL), 559–588 (GCSTPLMEAAQEGHLELVKYLLAAGANVHA), 592–621 (TGDTALTYACENGHTDVADVLLQAGADLEH), 625–654 (GGRTPLMKAARAGHVCTVQFLISKGANVNR), 659–688 (NDHTVLSLACAGGHLAVVELLLAHGADPTH), and 692–721 (DGSTMLIEAAKGGHTSVVCYLLDYPNNLLA). A Glycyl lysine isopeptide (Lys-Gly) (interchain with G-Cter in SUMO2) cross-link involves residue K314. The disordered stretch occupies residues 770–792 (VRSKAASKQKSNSHLPANSQDVQ). Positions 775 to 792 (ASKQKSNSHLPANSQDVQ) are enriched in polar residues. S799 is subject to Phosphoserine. ANK repeat units follow at residues 1078 to 1107 (NHDTALTLACAGGHEELVQTLLERGASIEH), 1111 to 1140 (KGFTPLILAATAGHVGVVEILLDNGADIEA), 1145 to 1174 (TKDTPLSLACSGGRQEVVELLLARGANKEH), 1178 to 1207 (SDYTPLSLAASGGYVNIIKILLNAGAEINS), 1213 to 1242 (LGISPLMLAAMNGHTAAVKLLLDMGSDINA), 1247 to 1276 (NRNTALTLACFQGRTEVVSLLLDRKANVEH), 1280 to 1309 (TGLTPLMEAASGGYAEVGRVLLDKGADVNA), 1315 to 1344 (SRDTALTIAADKGHYKFCELLIGKGAHIDV), 1348 to 1377 (KGNTPLWLAANGGHLDVVQLLVQATADVDA), and 1381 to 1410 (RKITPLMAAFRKGHVKVVRYLVKEVNQFPS). Residues 1438 to 1522 (VQAKDRQAAE…EKEKLKVEEE (85 aa)) adopt a coiled-coil conformation. S1453 is modified (phosphoserine). Disordered regions lie at residues 1475–1496 (AKREKRKEKRRKKKEEQRRKLE) and 1513–1713 (EKEK…PKRE). Basic residues predominate over residues 1477–1487 (REKRKEKRRKK). Composition is skewed to low complexity over residues 1526–1546 (LTEPPSATTTTTIGISATWTT), 1598–1607 (ESKSSSTSES), and 1616–1636 (SSCSDESSNSNSSRKSNNHAS). S1631 carries the phosphoserine modification. Composition is skewed to polar residues over residues 1638-1648 (VVTTTMASKKQ) and 1671-1699 (LSETVNEGTSNSLSTCTKSGPSPLSSPNG). Phosphoserine occurs at positions 1692, 1696, and 1705. A KH domain is found at 1721–1785 (RRSKKVSVPS…ESTRQATQLI (65 aa)). The residue at position 1870 (R1870) is an Asymmetric dimethylarginine. Disordered regions lie at residues 1902–1991 (PRLP…PSVR), 2007–2195 (TTVT…SSSA), and 2269–2327 (VSSQ…YGSV). 2 stretches are compositionally biased toward low complexity: residues 1946–1989 (SNQN…SSPS) and 2007–2024 (TTVTTTASNNSTAPTNAT). Residues S2038, S2040, S2041, S2043, S2055, and S2063 each carry the phosphoserine modification. Low complexity-rich tracts occupy residues 2068-2077 (ASASEQEASS), 2087-2108 (RPPHSSSSSGSSSGHSTQQQPP), and 2175-2189 (PPSHATAAPHKTPAP). A compositionally biased stretch (polar residues) spans 2269-2298 (VSSQSTPESMLSGKSSYLPNSDPLHQSDTS). Pro residues predominate over residues 2303-2313 (FRPPLQRPAPS). S2373 bears the Phosphoserine mark. The interval 2378–2447 (LTPCSSASNE…TGTSAPSVIG (70 aa)) is disordered. Over residues 2379 to 2391 (TPCSSASNESPAQ) the composition is skewed to polar residues. Low complexity predominate over residues 2392-2411 (SVSSGVRAPSPAPSSVPLGS). S2401 carries the post-translational modification Phosphoserine. Positions 2435-2447 (IRQTGTSAPSVIG) are enriched in polar residues.

Interacts (via N-terminus) with NOD2. Interacts with CDK2, MCM3, MCM5, MCM7, CDC6 and PCNA. Interacts with MAVS and IFIH1. Interacts (via the second ankyrin repeat cluster) with RIGI. Phosphorylated by CDK2. Highly expressed in fetal liver. Detected in adult liver cells, ovarian oocytes, seminiferous tubules of the testes and pelvic region of the kidney. It was not detected in heart, gut, lung, spleen and skeletal muscle. Earliest specific in situ marker of hepatic differentiation during embryogenesis, useful for characterization of inductive events involved in hepatic specification.

It localises to the cytoplasm. The protein resides in the nucleus. Its function is as follows. Could play pivotal roles in cell cycle and DNA regulation. Involved in innate immune defense against viruse by positively regulating the viral dsRNA receptors RIGI and IFIH1 signaling pathways. Involves in NOD2- and NOD1-mediated responses to bacteria suggesting a role in innate antibacterial immune pathways too. Could play a central role for the formation and/or maintenance of the blood vessels of the circulation system. The sequence is that of Ankyrin repeat domain-containing protein 17 (Ankrd17) from Mus musculus (Mouse).